Consider the following 281-residue polypeptide: 2,3,4,5-tetrahydropyridine-2,6-dicarboxylate N-succinyltransferase (281 aa).

Substrate is bound by residues R108 and D145.

This sequence belongs to the transferase hexapeptide repeat family. As to quaternary structure, homotrimer.

It localises to the cytoplasm. The enzyme catalyses (S)-2,3,4,5-tetrahydrodipicolinate + succinyl-CoA + H2O = (S)-2-succinylamino-6-oxoheptanedioate + CoA. Its pathway is amino-acid biosynthesis; L-lysine biosynthesis via DAP pathway; LL-2,6-diaminopimelate from (S)-tetrahydrodipicolinate (succinylase route): step 1/3. This Parvibaculum lavamentivorans (strain DS-1 / DSM 13023 / NCIMB 13966) protein is 2,3,4,5-tetrahydropyridine-2,6-dicarboxylate N-succinyltransferase.